Reading from the N-terminus, the 470-residue chain is Argininosuccinate lyase (470 aa).

Belongs to the lyase 1 family. Argininosuccinate lyase subfamily.

Its subcellular location is the cytoplasm. The catalysed reaction is 2-(N(omega)-L-arginino)succinate = fumarate + L-arginine. It participates in amino-acid biosynthesis; L-arginine biosynthesis; L-arginine from L-ornithine and carbamoyl phosphate: step 3/3. The chain is Argininosuccinate lyase from Ehrlichia chaffeensis (strain ATCC CRL-10679 / Arkansas).